The chain runs to 166 residues: Small ribosomal subunit protein uS5 (166 aa).

One can recognise an S5 DRBM domain in the interval 12–75 (YIEKLVQVNR…EAARRNMIQV (64 aa)).

The protein belongs to the universal ribosomal protein uS5 family. In terms of assembly, part of the 30S ribosomal subunit. Contacts proteins S4 and S8.

Its function is as follows. With S4 and S12 plays an important role in translational accuracy. Located at the back of the 30S subunit body where it stabilizes the conformation of the head with respect to the body. The polypeptide is Small ribosomal subunit protein uS5 (Ectopseudomonas mendocina (strain ymp) (Pseudomonas mendocina)).